A 363-amino-acid polypeptide reads, in one-letter code: Holliday junction branch migration complex subunit RuvB (363 aa).

The tract at residues 1-32 (MSDVERTEFEIPGGIPPRRNGGQGRAADTNVD) is disordered. A large ATPase domain (RuvB-L) region spans residues 27 to 207 (ADTNVDANLK…FGFTAQMEFY (181 aa)). Residues Leu-46, Arg-47, Gly-88, Lys-91, Thr-92, Thr-93, 154-156 (EDF), Arg-197, Tyr-207, and Arg-244 contribute to the ATP site. Thr-92 serves as a coordination point for Mg(2+). The small ATPAse domain (RuvB-S) stretch occupies residues 208 to 278 (DVPDLTKVVK…AANAALIVFD (71 aa)). The head domain (RuvB-H) stretch occupies residues 281–363 (EVGLDRLDRA…EPPEGTIGDY (83 aa)). DNA is bound by residues Arg-336 and Arg-341.

Belongs to the RuvB family. Homohexamer. Forms an RuvA(8)-RuvB(12)-Holliday junction (HJ) complex. HJ DNA is sandwiched between 2 RuvA tetramers; dsDNA enters through RuvA and exits via RuvB. An RuvB hexamer assembles on each DNA strand where it exits the tetramer. Each RuvB hexamer is contacted by two RuvA subunits (via domain III) on 2 adjacent RuvB subunits; this complex drives branch migration. In the full resolvosome a probable DNA-RuvA(4)-RuvB(12)-RuvC(2) complex forms which resolves the HJ.

It is found in the cytoplasm. It catalyses the reaction ATP + H2O = ADP + phosphate + H(+). Its function is as follows. The RuvA-RuvB-RuvC complex processes Holliday junction (HJ) DNA during genetic recombination and DNA repair, while the RuvA-RuvB complex plays an important role in the rescue of blocked DNA replication forks via replication fork reversal (RFR). RuvA specifically binds to HJ cruciform DNA, conferring on it an open structure. The RuvB hexamer acts as an ATP-dependent pump, pulling dsDNA into and through the RuvAB complex. RuvB forms 2 homohexamers on either side of HJ DNA bound by 1 or 2 RuvA tetramers; 4 subunits per hexamer contact DNA at a time. Coordinated motions by a converter formed by DNA-disengaged RuvB subunits stimulates ATP hydrolysis and nucleotide exchange. Immobilization of the converter enables RuvB to convert the ATP-contained energy into a lever motion, pulling 2 nucleotides of DNA out of the RuvA tetramer per ATP hydrolyzed, thus driving DNA branch migration. The RuvB motors rotate together with the DNA substrate, which together with the progressing nucleotide cycle form the mechanistic basis for DNA recombination by continuous HJ branch migration. Branch migration allows RuvC to scan DNA until it finds its consensus sequence, where it cleaves and resolves cruciform DNA. The polypeptide is Holliday junction branch migration complex subunit RuvB (Corynebacterium glutamicum (strain R)).